Here is a 293-residue protein sequence, read N- to C-terminus: MATLKDIRVRIKGVKSTQQVTKAMKMVAAAKLRRAQDRAIMARPYASKLKEMLASLSAKVDTSVNPLFAVRSEVNKVLVILVTSDRGLCGAFNGNIIKLAYKTIHEDYAAQYGKGGVSMICAGTRGYEFFKKRHYTLTKGYPAVFQNLDFAVAKEIADMASNMYLRGEVDRVVVVYNEFKSVLAPQLKSEVLLPITSGDASAKENSGGEYMYEPNPAAIIDVLLPKHLRTQVWRIMLESNAAEQAARMAAMDSATENAKELLRTLNISYNRARQAAITTELSEIVAGAEALNG.

It belongs to the ATPase gamma chain family. As to quaternary structure, F-type ATPases have 2 components, CF(1) - the catalytic core - and CF(0) - the membrane proton channel. CF(1) has five subunits: alpha(3), beta(3), gamma(1), delta(1), epsilon(1). CF(0) has three main subunits: a, b and c.

It localises to the cell inner membrane. Produces ATP from ADP in the presence of a proton gradient across the membrane. The gamma chain is believed to be important in regulating ATPase activity and the flow of protons through the CF(0) complex. This chain is ATP synthase gamma chain, found in Chlorobium chlorochromatii (strain CaD3).